The primary structure comprises 355 residues: F-box only protein 32 (355 aa).

A Nuclear localization signal motif is present at residues 62 to 67 (KKRKKD). A Nuclear export signal motif is present at residues 169–173 (LLQTL). One can recognise an F-box domain in the interval 223–271 (LTFTDLPLCLQLNIMQRLSDGRDLVSLGQVAPDLHVLSEDRLLWKKLCQ). The short motif at 280–295 (RKRLILSDKGQLDWKK) is the Bipartite nuclear localization signal element.

Part of the SCF (SKP1-CUL1-F-box) E3 ubiquitin-protein ligase complex SCF(FBXO32) formed of CUL1, SKP1, RBX1 and FBXO32.

The protein localises to the cytoplasm. Its subcellular location is the nucleus. The protein operates within protein modification; protein ubiquitination. In terms of biological role, substrate recognition component of a SCF (SKP1-CUL1-F-box protein) E3 ubiquitin-protein ligase complex which mediates the ubiquitination and subsequent proteasomal degradation of target proteins. Probably recognizes and binds to phosphorylated target proteins during skeletal muscle atrophy. Recognizes TERF1. The chain is F-box only protein 32 (FBXO32) from Sus scrofa (Pig).